We begin with the raw amino-acid sequence, 663 residues long: Ankyrin repeat and SAM domain-containing protein 3 (663 aa).

Residues 1 to 421 are interaction with NEK7; sequence MSELSDEASE…PGSEPQAEKS (421 aa). Phosphoserine occurs at positions 2 and 5. ANK repeat units lie at residues 34–64, 68–97, 101–130, 134–163, 168–197, and 201–220; these read DVPLDLHTAASIGQYEVVKECVQRRELDLNK, GGWTPLMYASYIGHDTIVHLLLEAGVSVNV, EGQTPLMLASSCGNESIAYFLLQQGAELEM, QGWTALFHCTSAGHQQMVKFLLESGANANV, YGFTPLMEAAAAGHEIIVQYFLNHGVKVDT, and SGATARMLAKQYGHMKIVAL. 3-hydroxyasparagine is present on N96. S201, S225, S243, S244, and S245 each carry phosphoserine. 2 disordered regions span residues 242 to 261 and 278 to 425; these read LSSSDESWPVPQRQRPCRKK and TGLG…PYSG. T318 bears the Phosphothreonine mark. A Phosphoserine modification is found at S319. Over residues 322 to 337 the composition is skewed to basic and acidic residues; that stretch reads NERDVESSSSSSREEP. Phosphoserine is present on residues S366, S369, and S373. A compositionally biased stretch (basic residues) spans 378–395; it reads KSSVRKQTRTYLKNKSRH. The region spanning 424–487 is the SAM domain; the sequence is SGPQDLATLL…TSAIARWHSS (64 aa). Residues 500 to 575 adopt a coiled-coil conformation; the sequence is ADRLEAEMQE…AALVLDQLRA (76 aa). S540 carries the post-translational modification Phosphoserine. 2 disordered regions span residues 585–604 and 637–663; these read KQHHSPSEATQNPPFLPADS and AEPGETTDAEWEEMEGTIARRDDSDVG. Residues 641-651 are compositionally biased toward acidic residues; that stretch reads ETTDAEWEEME. A compositionally biased stretch (basic and acidic residues) spans 654-663; sequence IARRDDSDVG.

In terms of assembly, homooligomer. Interacts (via SAM domain) with ANKS6 (via SAM domain). Interacts with BICC1. Interacts with NPHP1. Interacts with NEK8. Interacts with HIF1AN. Interacts with NEK7; this interaction alters the subcellular distribution of NEK7 by preventing its nuclear translocation. Hydroxylated at Asn-96, most probably by HIF1AN. In terms of processing, phosphorylations at Ser-5, Ser-225, Thr-318, Ser-319, Ser-366 and Ser-369 occur in a NEK7-dependent manner. Post-translationally, polyubiquitinated.

The protein localises to the cell projection. It localises to the cilium. Its subcellular location is the cytoplasm. In terms of biological role, may be involved in vasopressin signaling in the kidney. This Rattus norvegicus (Rat) protein is Ankyrin repeat and SAM domain-containing protein 3 (Anks3).